A 65-amino-acid chain; its full sequence is Stress-associated endoplasmic reticulum protein 2 (65 aa).

Residues 38-58 (GPWLLALFVFVVCGSAIFQII) form a helical membrane-spanning segment.

It belongs to the RAMP4 family. In terms of assembly, interacts with SEC61B, SEC61A1 and the SEC61 complex. Interacts with CANX.

The protein localises to the membrane. The protein resides in the endoplasmic reticulum membrane. Interacts with target proteins during their translocation into the lumen of the endoplasmic reticulum. Protects unfolded target proteins against degradation during ER stress. May facilitate glycosylation of target proteins after termination of ER stress. May modulate the use of N-glycosylation sites on target proteins. This chain is Stress-associated endoplasmic reticulum protein 2 (SERP2), found in Bos taurus (Bovine).